An 898-amino-acid polypeptide reads, in one-letter code: Sodium/hydrogen exchanger 5 (898 aa).

Over 1–48 (MLSAALLLLPGLPLAGAGATEEPTQESGPLGEPPPGLALFRWQWHEVE) the chain is Cytoplasmic. A helical membrane pass occupies residues 49 to 69 (APYLVALWILVASLAKIVFHL). Over 70–76 (SRKVTSL) the chain is Extracellular. The chain crosses the membrane as a helical span at residues 77–97 (VPESCLLILLGLVLGGIVLAV). The Cytoplasmic portion of the chain corresponds to 98-106 (AKKAEYQLE). A helical membrane pass occupies residues 107–127 (PGTFFLFLLPPIVLDSGYFMP). Topologically, residues 128–137 (SRLFFDNLGA) are extracellular. Residues 138-158 (ILTYAVVGTLWNAFTTGVALW) form a helical membrane-spanning segment. The Cytoplasmic segment spans residues 159 to 176 (GLQQAGLVAPRVQAGLLD). A helical membrane pass occupies residues 177–197 (FLLFGSLISAVDPVAVLAVFE). The Extracellular segment spans residues 198 to 203 (EVHVNQ). The helical transmembrane segment at 204 to 224 (TLFIIIFGESLLNDAVTVVLY) threads the bilayer. At 225 to 249 (KVCNSFVEMGSANVQATDYLKGVAS) the chain is on the cytoplasmic side. Residues 250-270 (LFVVSLGGAAVGLVFAFLLAL) form a helical membrane-spanning segment. At 271–279 (TTRFTKRVR) the chain is on the extracellular side. A helical membrane pass occupies residues 280-300 (IIEPLLVFLLAYAAYLTAEMA). Topologically, residues 301–334 (SLSAILAVTMCGLGCKKYVEANISHKSRTAVKYT) are cytoplasmic. The helical transmembrane segment at 335 to 355 (MKTLASCAETVIFMLLGISAV) threads the bilayer. Over 356–363 (DSSKWAWD) the chain is Extracellular. A helical membrane pass occupies residues 364-384 (SGLVLGTLFFILFFRALGVVL). Topologically, residues 385–401 (QTWALNQFRLVPLDKID) are cytoplasmic. The chain crosses the membrane as a helical span at residues 402–422 (QVVMSYGGLRGAVAFALVILL). At 423–431 (DRTKVPAKD) the chain is on the extracellular side. The helical transmembrane segment at 432–452 (YFVATTIVVVFFTVIVQGLTI) threads the bilayer. The Cytoplasmic segment spans residues 453–898 (KPLVKWLRVK…CIQFNRGGRL (446 aa)). Disordered stretches follow at residues 660-693 (FTKS…RDLG) and 826-866 (EEPQ…PQQE). Residues 663-675 (SKPRPRKTSHKKK) show a composition bias toward basic residues. Residues 857–866 (ESSADIPQQE) show a composition bias toward polar residues.

Belongs to the monovalent cation:proton antiporter 1 (CPA1) transporter (TC 2.A.36) family. As to quaternary structure, interacts with CHP1 and CHP2. Interacts with ARRB2; facilitates the endocytosis of SLC9A5 from the plasma membrane. Interacts with RACK1; this interaction positively regulates SLC9A5 activity and promote SLC9A5 localization to focal adhesions. Interacts with SCAMP2; this interaction regulates SLC9A5 cell-surface targeting and SLC9A5 activity. Post-translationally, phosphorylated by PRKAA2; promotes its accumulation at the cell surface. Phosphorylated by CSNK2A1 in a manner favoring its beta-arrestin binding and endocytosis. As to expression, highest expression level is detected in brain. Expressed in hippocampal neurons (at protein level).

It localises to the cell membrane. The protein localises to the recycling endosome membrane. It is found in the cell projection. Its subcellular location is the dendritic spine membrane. The protein resides in the synaptic cell membrane. It localises to the cell junction. The protein localises to the focal adhesion. It carries out the reaction Na(+)(in) + H(+)(out) = Na(+)(out) + H(+)(in). Plasma membrane Na(+)/H(+) antiporter. Mediates the electroneutral exchange of intracellular H(+) ions for extracellular Na(+) in 1:1 stoichiometry. Responsible for regulating intracellular pH homeostasis, in particular in neural tissues. Acts as a negative regulator of dendritic spine growth. Plays a role in postsynaptic remodeling and signaling. Can also contribute to organellar pH regulation, with consequences for receptor tyrosine kinase trafficking. In Mus musculus (Mouse), this protein is Sodium/hydrogen exchanger 5 (Slc9a5).